The following is a 592-amino-acid chain: Aspartate--tRNA(Asp/Asn) ligase (592 aa).

Glu-172 contacts L-aspartate. The tract at residues Gln-196–Lys-199 is aspartate. Residue Arg-218 coordinates L-aspartate. ATP contacts are provided by residues Arg-218 to Glu-220 and Gln-227. His-450 serves as a coordination point for L-aspartate. Position 484 (Glu-484) interacts with ATP. L-aspartate is bound at residue Arg-491. Residue Gly-536 to Arg-539 participates in ATP binding.

The protein belongs to the class-II aminoacyl-tRNA synthetase family. Type 1 subfamily. As to quaternary structure, homodimer.

The protein localises to the cytoplasm. The catalysed reaction is tRNA(Asx) + L-aspartate + ATP = L-aspartyl-tRNA(Asx) + AMP + diphosphate. In terms of biological role, aspartyl-tRNA synthetase with relaxed tRNA specificity since it is able to aspartylate not only its cognate tRNA(Asp) but also tRNA(Asn). Reaction proceeds in two steps: L-aspartate is first activated by ATP to form Asp-AMP and then transferred to the acceptor end of tRNA(Asp/Asn). The chain is Aspartate--tRNA(Asp/Asn) ligase from Thioalkalivibrio sulfidiphilus (strain HL-EbGR7).